A 389-amino-acid chain; its full sequence is Chalcone synthase 3 (389 aa).

C164 is an active-site residue.

This sequence belongs to the thiolase-like superfamily. Chalcone/stilbene synthases family.

It catalyses the reaction (E)-4-coumaroyl-CoA + 3 malonyl-CoA + 3 H(+) = 2',4,4',6'-tetrahydroxychalcone + 3 CO2 + 4 CoA. Its pathway is secondary metabolite biosynthesis; flavonoid biosynthesis. In terms of biological role, the primary product of this enzyme is 4,2',4',6'-tetrahydroxychalcone (also termed naringenin-chalcone or chalcone) which can under specific conditions spontaneously isomerize into naringenin. In Pisum sativum (Garden pea), this protein is Chalcone synthase 3 (CHS3).